We begin with the raw amino-acid sequence, 319 residues long: Lipoyl synthase (319 aa).

The tract at residues Met1–Ser28 is disordered. Basic and acidic residues predominate over residues Arg16–Ser28. Positions 61, 66, 72, 87, 91, 94, and 300 each coordinate [4Fe-4S] cluster. One can recognise a Radical SAM core domain in the interval Trp73–Leu289.

Belongs to the radical SAM superfamily. Lipoyl synthase family. It depends on [4Fe-4S] cluster as a cofactor.

The protein resides in the cytoplasm. The enzyme catalyses [[Fe-S] cluster scaffold protein carrying a second [4Fe-4S](2+) cluster] + N(6)-octanoyl-L-lysyl-[protein] + 2 oxidized [2Fe-2S]-[ferredoxin] + 2 S-adenosyl-L-methionine + 4 H(+) = [[Fe-S] cluster scaffold protein] + N(6)-[(R)-dihydrolipoyl]-L-lysyl-[protein] + 4 Fe(3+) + 2 hydrogen sulfide + 2 5'-deoxyadenosine + 2 L-methionine + 2 reduced [2Fe-2S]-[ferredoxin]. It participates in protein modification; protein lipoylation via endogenous pathway; protein N(6)-(lipoyl)lysine from octanoyl-[acyl-carrier-protein]: step 2/2. Functionally, catalyzes the radical-mediated insertion of two sulfur atoms into the C-6 and C-8 positions of the octanoyl moiety bound to the lipoyl domains of lipoate-dependent enzymes, thereby converting the octanoylated domains into lipoylated derivatives. This is Lipoyl synthase from Rhodopseudomonas palustris (strain HaA2).